Here is a 327-residue protein sequence, read N- to C-terminus: Voltage-dependent calcium channel gamma-4 subunit (327 aa).

Residues 1 to 9 (MVRCDRGLQ) lie on the Cytoplasmic side of the membrane. The chain crosses the membrane as a helical span at residues 10 to 30 (MLLTTAGAFAAFSLMAIAIGT). The Extracellular segment spans residues 31–107 (DYWLYSSAHI…EYLLRIVRAS (77 aa)). 2 N-linked (GlcNAc...) asparagine glycosylation sites follow: asparagine 42 and asparagine 45. Residues 108–128 (SVFPILSTILLLLGGLCIGAG) form a helical membrane-spanning segment. Residues 129-136 (RIYSRKNN) are Cytoplasmic-facing. The chain crosses the membrane as a helical span at residues 137-157 (IVLSAGILFVAAGLSNIIGII). The Extracellular portion of the chain corresponds to 158-186 (VYISSNTGDPSDKRDEDKKNHYNYGWSFY). The chain crosses the membrane as a helical span at residues 187 to 207 (FGALSFIVAETVGVLAVNIYI). The Cytoplasmic segment spans residues 208–327 (EKNKELRFKT…SMLNRRTTPV (120 aa)). Residues 235-261 (SYRYRRRRSRSSSRSTEASPSRDVSPM) form a disordered region. Residues 246–256 (SSRSTEASPSR) show a composition bias toward low complexity. At serine 259 the chain carries Phosphoserine.

The protein belongs to the PMP-22/EMP/MP20 family. CACNG subfamily. As to quaternary structure, interacts with CACNA1C. Identified in a complex with the L-type calcium channel subunits CACNA1C, CACNA2D1 and either CACNB1 or CACNB2. Acts as an auxiliary subunit for AMPA-selective glutamate receptors (AMPARs). Interacts with GRIA1. In terms of tissue distribution, detected in heart left ventricle.

Its subcellular location is the cell membrane. In terms of biological role, regulates the activity of L-type calcium channels that contain CACNA1C as pore-forming subunit. Regulates the trafficking and gating properties of AMPA-selective glutamate receptors (AMPARs), including GRIA1 and GRIA4. Promotes their targeting to the cell membrane and synapses and modulates their gating properties by slowing their rates of activation, deactivation and desensitization and by mediating their resensitization. The protein is Voltage-dependent calcium channel gamma-4 subunit (CACNG4) of Homo sapiens (Human).